A 265-amino-acid chain; its full sequence is Transmembrane protein 270 (265 aa).

Helical transmembrane passes span 72–92 (PLGQALWAGLALIQVPVWLVL), 130–150 (LFLSCLHGLMLVALLLVVVTW), and 185–205 (LYWWVETMTALTSWHLAYLIT). The segment at 229-265 (QEVEPQEVSGSSLLPSLSASSDSESGTVLPEQETPRE) is disordered. The span at 237 to 253 (SGSSLLPSLSASSDSES) shows a compositional bias: low complexity.

The protein localises to the membrane. This chain is Transmembrane protein 270, found in Homo sapiens (Human).